A 237-amino-acid chain; its full sequence is Phosphoribosylaminoimidazole-succinocarboxamide synthase (237 aa).

Belongs to the SAICAR synthetase family.

The catalysed reaction is 5-amino-1-(5-phospho-D-ribosyl)imidazole-4-carboxylate + L-aspartate + ATP = (2S)-2-[5-amino-1-(5-phospho-beta-D-ribosyl)imidazole-4-carboxamido]succinate + ADP + phosphate + 2 H(+). The protein operates within purine metabolism; IMP biosynthesis via de novo pathway; 5-amino-1-(5-phospho-D-ribosyl)imidazole-4-carboxamide from 5-amino-1-(5-phospho-D-ribosyl)imidazole-4-carboxylate: step 1/2. The polypeptide is Phosphoribosylaminoimidazole-succinocarboxamide synthase (Psychrobacter arcticus (strain DSM 17307 / VKM B-2377 / 273-4)).